Consider the following 133-residue polypeptide: Holo-[acyl-carrier-protein] synthase (133 aa).

Residues Asp8 and Glu57 each contribute to the Mg(2+) site.

Belongs to the P-Pant transferase superfamily. AcpS family. Mg(2+) is required as a cofactor.

It is found in the cytoplasm. The catalysed reaction is apo-[ACP] + CoA = holo-[ACP] + adenosine 3',5'-bisphosphate + H(+). Its function is as follows. Transfers the 4'-phosphopantetheine moiety from coenzyme A to a Ser of acyl-carrier-protein. In Bartonella henselae (strain ATCC 49882 / DSM 28221 / CCUG 30454 / Houston 1) (Rochalimaea henselae), this protein is Holo-[acyl-carrier-protein] synthase.